The sequence spans 433 residues: MADSLELVIDTIMAREVLDSRGNPTVEAEVLLEGGAIGRSIVPSGASTGAHEAHELRDGGKRYLGKGVLQAVNHIEENIAPALCGLSSLDQATVDSVMKQLDDTDNKSNLGANSILAVSMATARAAANGLGLPLYRYLGGPMSSLLPVPLMNVINGGEHAANNLDFQEFMLVPHGAESFREALRMGAEVFHTLKDLLSQKGLSTAVGDEGGFAPNLESNKAAGDLLMQAIEQAGFKPGEQVSLALDVASTEFYAEGQYCYGGNSYSSEQMVEELAGLVNAFPIVSIEDGLAEDDWDGWRLLTKKLGKNVQLVGDDLFVTNTLRLQRGIDENIANSILIKVNQIGSLTETLEAIELASRSSYTTVISHRSGETEDTTIADLSVATKSGQIKTGSLSRSERVAKYNQLLRIEDELGSQATYAGLVGLGPRGSLKG.

A (2R)-2-phosphoglycerate-binding site is contributed by Gln-167. Catalysis depends on Glu-209, which acts as the Proton donor. Mg(2+)-binding residues include Asp-246, Glu-287, and Asp-314. (2R)-2-phosphoglycerate-binding residues include Lys-339, Arg-368, Ser-369, and Lys-390. The active-site Proton acceptor is Lys-339.

It belongs to the enolase family. Mg(2+) is required as a cofactor.

It localises to the cytoplasm. The protein localises to the secreted. It is found in the cell surface. The enzyme catalyses (2R)-2-phosphoglycerate = phosphoenolpyruvate + H2O. It participates in carbohydrate degradation; glycolysis; pyruvate from D-glyceraldehyde 3-phosphate: step 4/5. Its function is as follows. Catalyzes the reversible conversion of 2-phosphoglycerate (2-PG) into phosphoenolpyruvate (PEP). It is essential for the degradation of carbohydrates via glycolysis. The polypeptide is Enolase (Prochlorococcus marinus (strain NATL2A)).